We begin with the raw amino-acid sequence, 842 residues long: MSLSAAANKISDNDFQNIGPAPRPPSSNSQGRTCYNQTQPITKLMSQLDLTSASHLGTSTSKKKSGWVSYKDDGILSFIWQKRYLMLHDSYVALYKNDKQNDDAILKIPLTSIISVSRTQLKQYCFELVRCSDRNSVSSGSSSSLNVSSDSNSKKSIYIATKTESDLHSWLDAIFAKCPLLSGVSSPTNFTHKVHVGFDPETGSFVGMPTNWEKLLKHSRITGEDWNNNSAAVIQVLQFYQEYNGAGNPTNTLDKPQSGETSSSQKSLPNSYNDNKLRNNSVNSKSSSGVSSSMVSQRKTSQPPNTKSPVSLGSGSLPPINTKLPTSQSNIPRHLQNVPNQQYPKMRNGHSPTNGQFPRGPMHPNNSQRSLQQQQQQQQQQKQQHQQYPYHHQGPSPSPSPSPSPLNPYRPHHNMINPYSKQPQSPLSSQSTQNQAIPRYAQNSSPTAAHFQPQRTAPKPPISAPRAPYPSNQNATSNTHVQPVAPKNDQSTPQTMRQAPKRPDADVAQPGGVAKPKKPARPTMSTAEIMSKLKKVTVNADPSQCFKVIEKAGQGASGSVYLAERTHIPTESNMIELINNDIDEPHVGDKVAIKQMVLSKQPRKELIVNEILVMKDSRHKNIVNFLEAYLRTDDDLWVVMEFMEGGSLTDIIENSPTNDNSHSPLTEPQIAYIVRETCQGLKFLHDKHIIHRDIKSDNVLLDTRARVKITDFGFCARLTDKRSKRATMVGTPYWMAPEVVKQREYDEKIDVWSLGIMTIEMLEGEPPYLNEDPLKALYLIATNGTPKLKHPESLSLEIKRFLSVCLCVDVRYRASTEELLHHGFFNMACDPKDLTSLLEWKE.

Positions 12–34 (DNDFQNIGPAPRPPSSNSQGRTC) are disordered. S29 and S46 each carry phosphoserine. One can recognise a PH domain in the interval 61-179 (SKKKSGWVSY…WLDAIFAKCP (119 aa)). In terms of domain architecture, CRIB spans 184-197 (VSSPTNFTHKVHVG). The segment covering 247–274 (GNPTNTLDKPQSGETSSSQKSLPNSYND) has biased composition (polar residues). The disordered stretch occupies residues 247-524 (GNPTNTLDKP…KPKKPARPTM (278 aa)). Low complexity predominate over residues 279–296 (NNSVNSKSSSGVSSSMVS). Positions 297-307 (QRKTSQPPNTK) are enriched in polar residues. A compositionally biased stretch (low complexity) spans 308-319 (SPVSLGSGSLPP). Over residues 323–343 (KLPTSQSNIPRHLQNVPNQQY) the composition is skewed to polar residues. 2 positions are modified to phosphoserine: S351 and S367. The segment covering 372-387 (QQQQQQQQQQKQQHQQ) has biased composition (low complexity). The segment covering 396–408 (SPSPSPSPSPLNP) has biased composition (pro residues). Over residues 418-435 (PYSKQPQSPLSSQSTQNQ) the composition is skewed to low complexity. S425 carries the post-translational modification Phosphoserine. 2 stretches are compositionally biased toward polar residues: residues 470 to 481 (PSNQNATSNTHV) and 488 to 497 (NDQSTPQTMR). One can recognise a Protein kinase domain in the interval 546-825 (FKVIEKAGQG…TEELLHHGFF (280 aa)). ATP is bound by residues 552 to 560 (AGQGASGSV) and K594. D693 functions as the Proton acceptor in the catalytic mechanism.

Belongs to the protein kinase superfamily. STE Ser/Thr protein kinase family. STE20 subfamily. Interacts with CDC42.

The catalysed reaction is L-seryl-[protein] + ATP = O-phospho-L-seryl-[protein] + ADP + H(+). It carries out the reaction L-threonyl-[protein] + ATP = O-phospho-L-threonyl-[protein] + ADP + H(+). In terms of biological role, involved in budding and cytokinesis. The chain is Serine/threonine-protein kinase CLA4 (CLA4) from Saccharomyces cerevisiae (strain ATCC 204508 / S288c) (Baker's yeast).